The following is a 361-amino-acid chain: Histidinol-phosphate aminotransferase (361 aa).

Position 219 is an N6-(pyridoxal phosphate)lysine (K219).

It belongs to the class-II pyridoxal-phosphate-dependent aminotransferase family. Histidinol-phosphate aminotransferase subfamily. Homodimer. The cofactor is pyridoxal 5'-phosphate.

The catalysed reaction is L-histidinol phosphate + 2-oxoglutarate = 3-(imidazol-4-yl)-2-oxopropyl phosphate + L-glutamate. It functions in the pathway amino-acid biosynthesis; L-histidine biosynthesis; L-histidine from 5-phospho-alpha-D-ribose 1-diphosphate: step 7/9. The polypeptide is Histidinol-phosphate aminotransferase (Cereibacter sphaeroides (strain ATCC 17029 / ATH 2.4.9) (Rhodobacter sphaeroides)).